Consider the following 294-residue polypeptide: 2-oxoglutaramate amidase (294 aa).

One can recognise a CN hydrolase domain in the interval 16–261; the sequence is LDVAAVQVKF…EAVLRATLNF (246 aa). Glu55 acts as the Proton acceptor in catalysis. The active-site Proton donor is Lys129. The active-site Nucleophile is Cys168.

The protein belongs to the carbon-nitrogen hydrolase superfamily. NIT1/NIT2 family.

It carries out the reaction 2-oxoglutaramate + H2O = 2-oxoglutarate + NH4(+). It participates in alkaloid degradation; nicotine degradation. Its function is as follows. Catalyzes the conversion of 2-oxoglutaramate to 2-oxoglutarate. Together with glutamate dehydrogenase, may form a physiologically relevant enzyme couple, leading to transformation of metabolically inert 2-oxoglutaramate derived from trihydroxypyridine into glutamate, a central compound of nitrogen metabolism. The protein is 2-oxoglutaramate amidase of Paenarthrobacter nicotinovorans (Arthrobacter nicotinovorans).